A 112-amino-acid chain; its full sequence is UPF0102 protein THEYE_A1950 (112 aa).

It belongs to the UPF0102 family.

This is UPF0102 protein THEYE_A1950 from Thermodesulfovibrio yellowstonii (strain ATCC 51303 / DSM 11347 / YP87).